A 213-amino-acid chain; its full sequence is Cytochrome b6 (213 aa).

The helical transmembrane segment at 30-50 threads the bilayer; sequence IFFCLGGLTLLCFIVQCLTGI. A heme c-binding site is contributed by Cys-33. Heme b-binding residues include His-84 and His-98. 3 consecutive transmembrane segments (helical) span residues 88–108, 114–134, and 184–204; these read CQLM…TGAF, LNWV…FTGY, and LHVM…FIMI. His-185 and His-200 together coordinate heme b.

It belongs to the cytochrome b family. PetB subfamily. As to quaternary structure, the subunits of the cytochrome bc complex are a Rieske Fe-S protein (PetC), cytochrome b6 (PetB), subunit IV (PetD), and a diheme cytochrome c (PetX). The cofactor is heme b. Requires heme c as cofactor.

It is found in the cell membrane. Component of the cytochrome bc complex which donates electrons to the photosynthetic reaction center. This Heliomicrobium gestii (Heliobacterium gestii) protein is Cytochrome b6.